The following is a 180-amino-acid chain: Transcriptional repressor NrdR (180 aa).

Residues 3–34 (CPYCQNTSSRVLESRSTEAGQSIRRRRECLQC) fold into a zinc finger. An ATP-cone domain is found at 49-139 (ISVLKKDKSK…VYGEFKGITD (91 aa)). The segment at 148–180 (QQEERESSSSPEWSDAGEEATVIEDSSQVMASS) is disordered. A compositionally biased stretch (polar residues) spans 171–180 (EDSSQVMASS).

This sequence belongs to the NrdR family. Zn(2+) serves as cofactor.

In terms of biological role, negatively regulates transcription of bacterial ribonucleotide reductase nrd genes and operons by binding to NrdR-boxes. In Gloeothece citriformis (strain PCC 7424) (Cyanothece sp. (strain PCC 7424)), this protein is Transcriptional repressor NrdR.